A 229-amino-acid chain; its full sequence is Protein-lysine N-methyltransferase EFM4 (229 aa).

It belongs to the class I-like SAM-binding methyltransferase superfamily. EFM4 family.

It is found in the cytoplasm. The catalysed reaction is L-lysyl-[protein] + S-adenosyl-L-methionine = N(6)-methyl-L-lysyl-[protein] + S-adenosyl-L-homocysteine + H(+). The enzyme catalyses N(6)-methyl-L-lysyl-[protein] + S-adenosyl-L-methionine = N(6),N(6)-dimethyl-L-lysyl-[protein] + S-adenosyl-L-homocysteine + H(+). In terms of biological role, S-adenosyl-L-methionine-dependent protein-lysine N-methyltransferase that mono- and dimethylates elongation factor 1-alpha (TEF1 and TEF2) at 'Lys-316'. May play a role in intracellular transport. This chain is Protein-lysine N-methyltransferase EFM4, found in Saccharomyces cerevisiae (strain ATCC 204508 / S288c) (Baker's yeast).